Here is a 713-residue protein sequence, read N- to C-terminus: Phospholipase A1 PLIP2, chloroplastic (713 aa).

A chloroplast-targeting transit peptide spans 1 to 32; sequence MDSLCLNSGLHGVIPAITAVGNGGCGGVVEVR. 2 disordered regions span residues 118–140 and 232–261; these read WKHE…DEEV and ALKA…EKNK. Positions 122–140 are enriched in acidic residues; sequence EEEDDDEVEDEDGDEDEEV. The GXSXG signature appears at 426-430; the sequence is GHSLG. Serine 428 acts as the Acyl-ester intermediate in catalysis. Catalysis depends on charge relay system residues aspartate 489 and histidine 608.

It belongs to the AB hydrolase superfamily. Lipase family.

Its subcellular location is the plastid. It localises to the chloroplast membrane. It is found in the chloroplast stroma. It catalyses the reaction a 1,2-diacyl-3-O-(beta-D-galactosyl)-sn-glycerol + 2 H2O = 3-beta-D-galactosyl-sn-glycerol + 2 a fatty acid + 2 H(+). The catalysed reaction is a 1,2-diacyl-sn-glycero-3-phosphocholine + H2O = a 2-acyl-sn-glycero-3-phosphocholine + a fatty acid + H(+). It carries out the reaction 1-hexadecanoyl-2-(9Z-octadecenoyl)-sn-glycero-3-phosphocholine + H2O = 2-(9Z-octadecenoyl)-sn-glycero-3-phosphocholine + hexadecanoate + H(+). The enzyme catalyses 1,2-di-(9Z-octadecenoyl)-sn-glycero-3-phosphocholine + H2O = 2-(9Z-octadecenoyl)-sn-glycero-3-phosphocholine + (9Z)-octadecenoate + H(+). It catalyses the reaction 1-octadecanoyl-2-(9Z-octadecenoyl)-sn-glycero-3-phosphocholine + H2O = 2-(9Z-octadecenoyl)-sn-glycero-3-phosphocholine + octadecanoate + H(+). The catalysed reaction is 1-octadecanoyl-2-(9Z,12Z)-octadecadienoyl-sn-glycero-3-phosphocholine + H2O = 2-(9Z,12Z-octadecadienoyl)-sn-glycero-3-phosphocholine + octadecanoate + H(+). It carries out the reaction 1,2-di-(9Z,12Z-octadecadienoyl)-sn-glycero-3-phosphocholine + H2O = 2-(9Z,12Z-octadecadienoyl)-sn-glycero-3-phosphocholine + (9Z,12Z)-octadecadienoate + H(+). The enzyme catalyses 1-(9Z-octadecenoyl)-2-hexadecanoyl-sn-glycero-3-phosphocholine + H2O = 2-hexadecanoyl-sn-glycero-3-phosphocholine + (9Z)-octadecenoate + H(+). Its function is as follows. Sn-1-specific phospholipase A1 that catalyzes the initial step of oxylipins and jasmonate (JA) biosynthesis. Hydrolyzes polyunsaturated acyl groups preferentially from chloroplastic monogalactosyldiacylglycerol (MGDG). May function downstream of abscisic acid (ABA) and provide a link between ABA-mediated abiotic stress responses and oxylipin and JA signalings. In vitro, possesses broad substrate specificity. Can hydrolyze the galactolipids monogalactosyldiacylglycerol (MGDG) and digalactosyldiacylglycerol (DGDG), the sulfolipid sulfoquinovosyldiacylglycerol (SQDG), and the phoshpolipids phosphatidylcholine (PC), and phosphatidylglycerol (PG). This is Phospholipase A1 PLIP2, chloroplastic from Arabidopsis thaliana (Mouse-ear cress).